The following is a 341-amino-acid chain: UPF0283 membrane protein VV2076 (341 aa).

4 helical membrane-spanning segments follow: residues 64-84 (LAGG…VDSV), 93-113 (WLTL…LGAM), 207-227 (ESAA…LVAW), and 255-275 (LVLA…AGMD).

It belongs to the UPF0283 family.

The protein resides in the cell inner membrane. This is UPF0283 membrane protein VV2076 from Vibrio vulnificus (strain YJ016).